The chain runs to 600 residues: NADH-quinone oxidoreductase subunit C/D (600 aa).

The NADH dehydrogenase I subunit C stretch occupies residues 1–190; it reads MIDLMPKKNT…EPFFLNEQKE (190 aa). An NADH dehydrogenase I subunit D region spans residues 214–600; the sequence is EFMFLNLGPN…IDFVMSDVDR (387 aa).

In the N-terminal section; belongs to the complex I 30 kDa subunit family. This sequence in the C-terminal section; belongs to the complex I 49 kDa subunit family. In terms of assembly, NDH-1 is composed of 13 different subunits. Subunits NuoB, CD, E, F, and G constitute the peripheral sector of the complex.

Its subcellular location is the cell membrane. It catalyses the reaction a quinone + NADH + 5 H(+)(in) = a quinol + NAD(+) + 4 H(+)(out). Functionally, NDH-1 shuttles electrons from NADH, via FMN and iron-sulfur (Fe-S) centers, to quinones in the respiratory chain. The immediate electron acceptor for the enzyme in this species is believed to be ubiquinone. Couples the redox reaction to proton translocation (for every two electrons transferred, four hydrogen ions are translocated across the cytoplasmic membrane), and thus conserves the redox energy in a proton gradient. This chain is NADH-quinone oxidoreductase subunit C/D, found in Buchnera aphidicola subsp. Acyrthosiphon pisum (strain 5A).